A 969-amino-acid polypeptide reads, in one-letter code: Defective in germ line development protein 3 (969 aa).

Residues 34–81 are gld-2-binding; sequence MAENAASARKLFVSSALKDIIVNPENFYHDFQQSAQMAEDANQRRQVS. KH domains lie at 34–109, 113–187, 189–259, 270–342, and 344–419; these read MAEN…MIEI, RVTL…MRRN, HFTV…NEIL, FTLH…IMDL, and PISM…YQKV. The tract at residues 57–471 is gls-1-binding; that stretch reads PENFYHDFQQ…GSNGRRHRSS (415 aa). Disordered regions lie at residues 459-508 and 602-711; these read LSDG…SFSE and EQHR…GDIH. A compositionally biased stretch (polar residues) spans 487 to 508; sequence KQFSESSGGPSRSHTRVSSFSE. Positions 631-644 are enriched in low complexity; it reads PSSSTGSYYPSTTP. Over residues 647-659 the composition is skewed to basic and acidic residues; sequence RVYEQVREDDLRS. The span at 664–676 shows a compositional bias: polar residues; that stretch reads RRTSVNGDDQNVE. Composition is skewed to basic and acidic residues over residues 677–687 and 694–711; these read SMHDQGYERQY and LQKD…GDIH. The interval 769–969 is gls-1-binding; that stretch reads LYMHESPHND…DLSLDETSTY (201 aa). A fbf-1-binding region spans residues 860-949; it reads NGVTKTILEP…VLNEKEKEIA (90 aa). The interval 950–969 is disordered; that stretch reads DKSIESTVTQDLSLDETSTY. The segment covering 954 to 969 has biased composition (polar residues); sequence ESTVTQDLSLDETSTY.

In terms of assembly, interacts (via its KH1 domain) with gld-2. Isoform A but not isoform B interacts specifically with fbf-1 and fbf-2 in an RNA-independent manner. Isoform A interacts with gls-1 isoform C. In terms of tissue distribution, expressed in the germline (at protein level). In adult hermaphrodites, first detected in the transition zone (TZ), weakly expressed in the early mitotic region and in pachytene germ cells, and becomes more abundantly expressed as germ cells enter diakinesis (at protein level). Expressed in primary spermatocytes, but not in secondary spermatocytes or adult sperm (at protein level).

The protein localises to the cytoplasm. Its subcellular location is the cytoplasmic granule. It localises to the perinuclear region. Required maternally for germline survival and embryogenesis. Forms a complex with gls-1 which promotes the oogenic cell fate by freeing the translational repressor fbf to repress sperm promoting factors. Promotes maturation of primary spermatocytes to mature sperm. Required during hermaphrodite development to promote sperm fate, which is critical for determining the normal number of sperm. Promotion of sperm fate is at the expense of oogenesis, possibly through the negative regulation of fbf. Required during male development for the continued production of sperm and inhibition of oogenesis. Together with gld-2, promotes the transition from mitosis to meiosis. Required for polyadenylation of neg-1 mRNA during embryogenesis. This is Defective in germ line development protein 3 from Caenorhabditis elegans.